The following is a 1464-amino-acid chain: MDVLELLRASATGCYNTIFSEAWHQYVHKQIAAAVYWYGALFLLGVLLFVWFLYFKRLARLRLRDEIARSLSAVTSAATGVDHRGLRFRKRDKMLFYGRRMLRKMKNVSGQMYSSGKGYKRRAVMRFARRILQLQRENRPLEMKTVEPPAEYLEETIEGSDRVPPDALYMLQSIRIFGHFEKPIFLKLCKHTQILQLMAGDYLFKITDPDDSVYIVQSGMINVYICNADGSTLSLKTVRKGESVTSLLSFIDVLSGNSSYYKTVTAKAIEKSVVIRLPMQAFEEVFDENPDVMIRVIQVIMIRLQRVLFTALRNYLGLNAELVQNHMRNKNSSNPMATGQTTSNVQSQTSQATQSRPSGTTRTPTSPMLRLSREEHTLSDPDPNPNANNLHYHEMHGDAPYIDLYHYQQQQQSLNSPRRNSTAHVSEAAAASTASSPTTIDQRLVQSSAVDSLRRELGLGEEDAHIIEQFVLVRELEPNVTLITEGNADDVCIWFVMTGNLAVYQSNADATRASAKQDAKPEMLIHFVHPGEIVGGLAMLTGEASAYTIRSRNNSRVAFIRRAAIYQIMRQRPRIVLGLGNGVVRRLSPLVRQCDYALDWIFLESGRAVYRQDESSDSTYIVLSGRMRSVITQPNGKKEIVGEYGKGDLVGIVEMITETSRTTTVMAVRDSELAKLPEGLFNAIKLRYPIVVTRLISFLSHRFLGSMQTRGSNAYGTPVEANPVTHKYSTVALVPITDDVPLTPFTYELYHSLCAIGPVLRLTSEVVGKQLGVNIFDTANEYRLTSWLAQQEDRNIITLYQCDSSLSPWTQRCMRQADVILIVGLGERSHLVGKFEREIDKLAMRTQKELVLLYPETTNAKPANTLSWLNARPWVTKHHHVLCVKRIFTRKSQYRINDLYSRVLLSEPNMHSDFSRLARWLTGNSIGLVLGGGGARGAAHIGMLKAIQEAGIPIDMVGGVSIGALMGALWCSERNITTVTQKAREWSKKMTKWFLQLLDLTYPITSMFSGREFNKTIHDTFGDVTIEDLWIPYFTLTTDITASCHRIHTNGSLWRFVRSSMSLSGYMPPLCDPQDGHLLLDGGYVNNLPGHLWRYCRASMSIAGVFPPFCDYRDGHLLLDGCYTNNVPADVMHNLGAAHIIAIDVGSQDDTDLTNYGDDLSGWWLLYKKWNPFTSPVKVPDLPDIQSRLAYVSCVRQLEEVKNSDYCEYIRPPIDKYKTLAFGSFDEIRDVGYVFGKNYFDTMAKAGRLGRFNQWFNKEPPKRGNHASLNEYTFIDLAQIVCKLPETYVRLGTPDLFSEDEDEDFDGYISEPTTLNTDRRRIQVHRAGNSLSFSEAELDSDVELDLEMENKVDKATQSTPTLPDKRSVQTPTPSLFNLTMPIAVDEIDKSSGRVKRKLEATNTASIAEPEASPSIKAEATTQTTPPTSKRTEQDEHELEHEQVVEKQQVMDKQQGNTTNNDTKN.

The Lumenal segment spans residues 1-34; the sequence is MDVLELLRASATGCYNTIFSEAWHQYVHKQIAAA. A helical membrane pass occupies residues 35-55; the sequence is VYWYGALFLLGVLLFVWFLYF. Topologically, residues 56 to 1464 are cytoplasmic; the sequence is KRLARLRLRD…GNTTNNDTKN (1409 aa). 176 to 303 provides a ligand contact to a nucleoside 3',5'-cyclic phosphate; the sequence is IFGHFEKPIF…IRVIQVIMIR (128 aa). Disordered stretches follow at residues 329–393 and 409–438; these read NKNS…LHYH and QQQQ…SSPT. The segment covering 338 to 367 has biased composition (low complexity); it reads TGQTTSNVQSQTSQATQSRPSGTTRTPTSP. Over residues 409–420 the composition is skewed to polar residues; sequence QQQQSLNSPRRN. Serine 421 carries the post-translational modification Phosphoserine. Low complexity predominate over residues 422 to 438; sequence TAHVSEAAAASTASSPT. Residues 456-586 and 575-702 contribute to the a nucleoside 3',5'-cyclic phosphate site; these read ELGL…VVRR and IVLG…LSHR. The region spanning 928-1094 is the PNPLA domain; that stretch reads LVLGGGGARG…VNNLPGHLWR (167 aa). The short motif at 932–937 is the GXGXXG element; the sequence is GGGARG. Residues 959 to 963 carry the GXSXG motif; sequence GVSIG. The Nucleophile role is filled by serine 961. Residue aspartate 1081 is the Proton acceptor of the active site. The DGA/G signature appears at 1081-1083; that stretch reads DGG. Phosphoserine is present on serine 1175. 2 disordered regions span residues 1352 to 1374 and 1400 to 1464; these read VDKA…PTPS and ATNT…DTKN. Positions 1429–1444 are enriched in basic and acidic residues; it reads KRTEQDEHELEHEQVV. Residues 1450–1464 show a composition bias toward polar residues; sequence MDKQQGNTTNNDTKN.

It belongs to the NTE family. In terms of assembly, interacts with Pka-C3; interaction inhibits the catalytic function of Pka-C3 and the esterase activity of sws.

Its subcellular location is the endoplasmic reticulum membrane. The enzyme catalyses a 1-acyl-sn-glycero-3-phosphocholine + H2O = sn-glycerol 3-phosphocholine + a fatty acid + H(+). Phospholipase B that deacylates intracellular phosphatidylcholine (PtdCho), generating glycerophosphocholine (GroPtdCho). This deacylation occurs at both sn-2 and sn-1 positions of PtdCho. Its specific chemical modification by certain organophosphorus (OP) compounds leads to distal axonopathy. Plays a role in the signaling mechanism between neurons and glia that regulates glia wrapping during development of the adult brain. Essential for membrane lipid homeostasis and cell survival in both neurons and glia of the adult brain. This Drosophila grimshawi (Hawaiian fruit fly) protein is Neuropathy target esterase sws.